Consider the following 413-residue polypeptide: Arginine biosynthesis bifunctional protein ArgJ (413 aa).

6 residues coordinate substrate: Thr160, Lys186, Thr197, Glu284, Asn408, and Ser413. The Nucleophile role is filled by Thr197.

This sequence belongs to the ArgJ family. In terms of assembly, heterotetramer of two alpha and two beta chains.

The protein resides in the cytoplasm. It carries out the reaction N(2)-acetyl-L-ornithine + L-glutamate = N-acetyl-L-glutamate + L-ornithine. The enzyme catalyses L-glutamate + acetyl-CoA = N-acetyl-L-glutamate + CoA + H(+). Its pathway is amino-acid biosynthesis; L-arginine biosynthesis; L-ornithine and N-acetyl-L-glutamate from L-glutamate and N(2)-acetyl-L-ornithine (cyclic): step 1/1. It functions in the pathway amino-acid biosynthesis; L-arginine biosynthesis; N(2)-acetyl-L-ornithine from L-glutamate: step 1/4. Its function is as follows. Catalyzes two activities which are involved in the cyclic version of arginine biosynthesis: the synthesis of N-acetylglutamate from glutamate and acetyl-CoA as the acetyl donor, and of ornithine by transacetylation between N(2)-acetylornithine and glutamate. This is Arginine biosynthesis bifunctional protein ArgJ from Burkholderia pseudomallei (strain 1710b).